Reading from the N-terminus, the 273-residue chain is Dermonecrotic toxin LhSicTox-alphaIA2av (273 aa).

The active site involves His5. Mg(2+) contacts are provided by Glu25 and Asp27. Residue His41 is the Nucleophile of the active site. Disulfide bonds link Cys45–Cys51 and Cys47–Cys190. Asp85 provides a ligand contact to Mg(2+).

Belongs to the arthropod phospholipase D family. Class II subfamily. It depends on Mg(2+) as a cofactor. In terms of tissue distribution, expressed by the venom gland.

It is found in the secreted. It catalyses the reaction an N-(acyl)-sphingosylphosphocholine = an N-(acyl)-sphingosyl-1,3-cyclic phosphate + choline. It carries out the reaction an N-(acyl)-sphingosylphosphoethanolamine = an N-(acyl)-sphingosyl-1,3-cyclic phosphate + ethanolamine. The catalysed reaction is a 1-acyl-sn-glycero-3-phosphocholine = a 1-acyl-sn-glycero-2,3-cyclic phosphate + choline. The enzyme catalyses a 1-acyl-sn-glycero-3-phosphoethanolamine = a 1-acyl-sn-glycero-2,3-cyclic phosphate + ethanolamine. Functionally, dermonecrotic toxins cleave the phosphodiester linkage between the phosphate and headgroup of certain phospholipids (sphingolipid and lysolipid substrates), forming an alcohol (often choline) and a cyclic phosphate. This toxin acts on sphingomyelin (SM). It may also act on ceramide phosphoethanolamine (CPE), lysophosphatidylcholine (LPC) and lysophosphatidylethanolamine (LPE), but not on lysophosphatidylserine (LPS), and lysophosphatidylglycerol (LPG). It acts by transphosphatidylation, releasing exclusively cyclic phosphate products as second products. Induces dermonecrosis, hemolysis, increased vascular permeability, edema, inflammatory response, and platelet aggregation. This is Dermonecrotic toxin LhSicTox-alphaIA2av from Loxosceles hirsuta (Recluse spider).